Here is a 227-residue protein sequence, read N- to C-terminus: MLLTIDDVLTQEELAIARSMLARSAWVSGLVTAGTQAAQVKNNQQVQENDPQIVNLRRLVLGALNRNALFFTATLPEKIVPPFFNRYSGETNHYGFHVDNAMRLLPDGSGYVRTDVSATLFLSDPQEYDGGELVINDTFGQHGVKLQAGSMVIYPSSSIHQVTPVTRGERLACFMFIQSMVRNPDQRRLLYEMDMALLQLRQNIGETPAVVSLTGTYHNLLRQWADS.

The Fe2OG dioxygenase domain maps to 78 to 179 (KIVPPFFNRY…RLACFMFIQS (102 aa)). Positions 97, 99, and 160 each coordinate Fe cation. Residue Arg-170 coordinates 2-oxoglutarate.

Fe(2+) serves as cofactor. L-ascorbate is required as a cofactor.

The protein is PKHD-type hydroxylase NE2125 of Nitrosomonas europaea (strain ATCC 19718 / CIP 103999 / KCTC 2705 / NBRC 14298).